We begin with the raw amino-acid sequence, 223 residues long: UPF0441 protein YgiB (223 aa).

The segment at 201 to 223 (ESVAKQSTMQRSAAGTSTRSMGG) is disordered. The segment covering 204-223 (AKQSTMQRSAAGTSTRSMGG) has biased composition (polar residues).

This sequence belongs to the UPF0441 family.

In Salmonella gallinarum (strain 287/91 / NCTC 13346), this protein is UPF0441 protein YgiB.